A 437-amino-acid chain; its full sequence is UDP-N-acetylmuramate--L-alanine ligase (437 aa).

108–114 (GAHGKTS) lines the ATP pocket.

It belongs to the MurCDEF family.

It localises to the cytoplasm. The catalysed reaction is UDP-N-acetyl-alpha-D-muramate + L-alanine + ATP = UDP-N-acetyl-alpha-D-muramoyl-L-alanine + ADP + phosphate + H(+). It participates in cell wall biogenesis; peptidoglycan biosynthesis. Functionally, cell wall formation. The chain is UDP-N-acetylmuramate--L-alanine ligase from Staphylococcus aureus (strain COL).